The primary structure comprises 281 residues: Digeranylgeranylglyceryl phosphate synthase (281 aa).

The next 5 helical transmembrane spans lie at 88-108, 132-152, 200-220, 225-245, and 261-281; these read IALS…EFLI, ALVS…AGNL, GILV…PVIF, IIYL…ASAI, and LIKV…FRVV.

The protein belongs to the UbiA prenyltransferase family. DGGGP synthase subfamily. Requires Mg(2+) as cofactor.

The protein resides in the cell membrane. The enzyme catalyses sn-3-O-(geranylgeranyl)glycerol 1-phosphate + (2E,6E,10E)-geranylgeranyl diphosphate = 2,3-bis-O-(geranylgeranyl)-sn-glycerol 1-phosphate + diphosphate. The protein operates within membrane lipid metabolism; glycerophospholipid metabolism. Prenyltransferase that catalyzes the transfer of the geranylgeranyl moiety of geranylgeranyl diphosphate (GGPP) to the C2 hydroxyl of (S)-3-O-geranylgeranylglyceryl phosphate (GGGP). This reaction is the second ether-bond-formation step in the biosynthesis of archaeal membrane lipids. The chain is Digeranylgeranylglyceryl phosphate synthase from Korarchaeum cryptofilum (strain OPF8).